The following is a 153-amino-acid chain: Large ribosomal subunit protein bL9 (153 aa).

This sequence belongs to the bacterial ribosomal protein bL9 family.

Functionally, binds to the 23S rRNA. This chain is Large ribosomal subunit protein bL9, found in Micrococcus luteus (strain ATCC 4698 / DSM 20030 / JCM 1464 / CCM 169 / CCUG 5858 / IAM 1056 / NBRC 3333 / NCIMB 9278 / NCTC 2665 / VKM Ac-2230) (Micrococcus lysodeikticus).